Reading from the N-terminus, the 743-residue chain is MNNPSETSKPSMESGDGNTGTQTNGLDFQKQPVPVGGAISTAQAQAFLGHLHQVQLAGTSLQAAAQSLNVQSKSNEESGDSQQPSQPSQQPSVQAAIPQTQLMLAGGQITGLTLTPAQQQLLLQQAQAQAQLLAAAVQQHSASQQHSAAGATISASAATPMTQIPLSQPIQIAQDLQQLQQLQQQNLNLQQFVLVHPTTNLQPAQFIISQTPQGQQGLLQAQNLLTQLPQQSQANLLQSQPSITLTSQPATPTRTIAATPIQTLPQSQSTPKRIDTPSLEEPSDLEELEQFAKTFKQRRIKLGFTQGDVGLAMGKLYGNDFSQTTISRFEALNLSFKNMCKLKPLLEKWLNDAENLSSDSSLSSPSALNSPGIEGLSRRRKKRTSIETNIRVALEKSFLENQKPTSEEITMIADQLNMEKEVIRVWFCNRRQKEKRINPPSSGGTSSSPIKAIFPSPTSLVATTPSLVTSSAATTLTVSPVLPLTSAAVTNLSVTGTSDTTSNNTATVISTAPPASSAVTSPSLSPSPSASASTSEASSASETSTTQTTSTPLSSPLGTSQVMVTASGLQTAAAAALQGAAQLPANASLAAMAAAAGLNPSLMAPSQFAAGGALLSLNPGTLSGALSPALMSNSTLATIQALASGGSLPITSLDATGNLVFANAGGAPNIVTAPLFLNPQNLSLLTSNPVSLVSAAAASAGNSAPVASLHATSTSAESIQNSLFTVASASGAASTTTTASKAQ.

The segment covering 1-11 has biased composition (polar residues); that stretch reads MNNPSETSKPS. Disordered regions lie at residues 1-34, 67-95, 258-283, and 357-381; these read MNNPSETSKPSMESGDGNTGTQTNGLDFQKQPVP, SLNVQSKSNEESGDSQQPSQPSQQPSVQA, ATPIQTLPQSQSTPKRIDTPSLEEPS, and SSDSSLSSPSALNSPGIEGLSRRRK. Positions 81 to 95 are enriched in low complexity; the sequence is SQQPSQPSQQPSVQA. Phosphothreonine is present on residues threonine 270 and threonine 276. The POU-specific domain maps to 280–354; the sequence is EEPSDLEELE…LLEKWLNDAE (75 aa). Serine 283 bears the Phosphoserine mark. Over residues 357–371 the composition is skewed to low complexity; it reads SSDSSLSSPSALNSP. Residues 379 to 438 constitute a DNA-binding region (homeobox); that stretch reads RRKKRTSIETNIRVALEKSFLENQKPTSEEITMIADQLNMEKEVIRVWFCNRRQKEKRIN. Residues serine 385 and serine 448 each carry the phosphoserine modification. Residues 494-504 are compositionally biased toward polar residues; that stretch reads VTGTSDTTSNN. The interval 494 to 557 is disordered; the sequence is VTGTSDTTSN…TTSTPLSSPL (64 aa). Over residues 505–557 the composition is skewed to low complexity; sequence TATVISTAPPASSAVTSPSLSPSPSASASTSEASSASETSTTQTTSTPLSSPL.

Belongs to the POU transcription factor family. Class-2 subfamily. As to quaternary structure, interacts with POU2AF1; the interaction increases POU2F1 transactivation activity. Interacts with NR3C1, AR, PGR and HCFC1. (Microbial infection) Associates with the herpes simplex virus VP16-induced complex; binding to HCFC1 activates the viral transcriptional activator VP16 for association with POU2F1, to form a multiprotein-DNA complex responsible for activating transcription of the viral immediate early genes. In terms of assembly, (Microbial infection) Interacts with human herpesvirus 8 (KSHV) protein RTA/ORF50; this interaction enhances RTA/ORF50-mediated transactivation of several viral promoters including K-bZIP promoter. Phosphorylated by PRKDC. As to expression, ubiquitous. Isoform 2 is lymphocyte-specific.

The protein resides in the nucleus. Its function is as follows. Transcription factor that binds to the octamer motif (5'-ATTTGCAT-3') and activates the promoters of the genes for some small nuclear RNAs (snRNA) and of genes such as those for histone H2B and immunoglobulins. Modulates transcription transactivation by NR3C1, AR and PGR. (Microbial infection) In case of human herpes simplex virus (HSV) infection, POU2F1 forms a multiprotein-DNA complex with the viral transactivator protein VP16 and HCFC1 thereby enabling the transcription of the viral immediate early genes. In Homo sapiens (Human), this protein is POU domain, class 2, transcription factor 1 (POU2F1).